The chain runs to 150 residues: Large ribosomal subunit protein uL13 (150 aa).

The tract at residues 130–150 (EHPHGAQQPQPYQLNPSASIK) is disordered. The segment covering 136 to 150 (QQPQPYQLNPSASIK) has biased composition (polar residues).

This sequence belongs to the universal ribosomal protein uL13 family. Part of the 50S ribosomal subunit.

Functionally, this protein is one of the early assembly proteins of the 50S ribosomal subunit, although it is not seen to bind rRNA by itself. It is important during the early stages of 50S assembly. In Synechococcus sp. (strain RCC307), this protein is Large ribosomal subunit protein uL13.